The sequence spans 131 residues: Small ribosomal subunit protein uS11 (131 aa).

The span at methionine 1 to arginine 15 shows a compositional bias: basic residues. The tract at residues methionine 1–alanine 23 is disordered.

The protein belongs to the universal ribosomal protein uS11 family. In terms of assembly, part of the 30S ribosomal subunit. Interacts with proteins S7 and S18. Binds to IF-3.

Its function is as follows. Located on the platform of the 30S subunit, it bridges several disparate RNA helices of the 16S rRNA. Forms part of the Shine-Dalgarno cleft in the 70S ribosome. In Clostridium beijerinckii (strain ATCC 51743 / NCIMB 8052) (Clostridium acetobutylicum), this protein is Small ribosomal subunit protein uS11.